Here is a 105-residue protein sequence, read N- to C-terminus: Thiosulfate sulfurtransferase GlpE (105 aa).

Residues 16–104 (DKEDVVIADI…WEAAYSEKVE (89 aa)) form the Rhodanese domain. Cys-64 functions as the Cysteine persulfide intermediate in the catalytic mechanism.

It belongs to the GlpE family.

It is found in the cytoplasm. It carries out the reaction thiosulfate + hydrogen cyanide = thiocyanate + sulfite + 2 H(+). It catalyses the reaction thiosulfate + [thioredoxin]-dithiol = [thioredoxin]-disulfide + hydrogen sulfide + sulfite + 2 H(+). In terms of biological role, transferase that catalyzes the transfer of sulfur from thiosulfate to thiophilic acceptors such as cyanide or dithiols. May function in a CysM-independent thiosulfate assimilation pathway by catalyzing the conversion of thiosulfate to sulfite, which can then be used for L-cysteine biosynthesis. The sequence is that of Thiosulfate sulfurtransferase GlpE from Pseudoalteromonas translucida (strain TAC 125).